The sequence spans 217 residues: MARKGILGTKLGMTQVFDENNRVVPVTVVKAGPNVVTRIRTPEQDGYSAVQLAYGEISPRKVNKPVTGQYAAAGINPRRFLAELRLDNPDAAAEYQVGQELTAEIFTDGSYVDVTGTSKGKGFAGTMKRHGFRGQGASHGAQAVHRRPGSIGGCATPARVFKGTRMAGRMGNDRVTVQNLLVHKVDTENGVLLIKGAVPGRTGGLVMVRSAVKRGEK.

It belongs to the universal ribosomal protein uL3 family. As to quaternary structure, part of the 50S ribosomal subunit. Forms a cluster with proteins L14 and L19.

Functionally, one of the primary rRNA binding proteins, it binds directly near the 3'-end of the 23S rRNA, where it nucleates assembly of the 50S subunit. The protein is Large ribosomal subunit protein uL3 of Mycolicibacterium paratuberculosis (strain ATCC BAA-968 / K-10) (Mycobacterium paratuberculosis).